Consider the following 430-residue polypeptide: 3-phosphoshikimate 1-carboxyvinyltransferase (430 aa).

A disordered region spans residues 1 to 20; it reads MHATVSPSRVRGRARAPPSK. 3-phosphoshikimate-binding residues include K20, S21, and R25. K20 is a binding site for phosphoenolpyruvate. Residues G91 and R119 each coordinate phosphoenolpyruvate. The 3-phosphoshikimate site is built by S164, S165, Q166, S192, D312, and K339. A phosphoenolpyruvate-binding site is contributed by Q166. The active-site Proton acceptor is the D312. Phosphoenolpyruvate-binding residues include R343 and R386.

It belongs to the EPSP synthase family. Monomer.

It is found in the cytoplasm. The catalysed reaction is 3-phosphoshikimate + phosphoenolpyruvate = 5-O-(1-carboxyvinyl)-3-phosphoshikimate + phosphate. The protein operates within metabolic intermediate biosynthesis; chorismate biosynthesis. Its function is as follows. Catalyzes the transfer of the enolpyruvyl moiety of phosphoenolpyruvate (PEP) to the 5-hydroxyl of shikimate-3-phosphate (S3P) to produce enolpyruvyl shikimate-3-phosphate and inorganic phosphate. This Halobacterium salinarum (strain ATCC 29341 / DSM 671 / R1) protein is 3-phosphoshikimate 1-carboxyvinyltransferase.